The primary structure comprises 70 residues: Large ribosomal subunit protein bL31 (70 aa).

Zn(2+) is bound by residues C16, C18, C37, and C40.

The protein belongs to the bacterial ribosomal protein bL31 family. Type A subfamily. Part of the 50S ribosomal subunit. Zn(2+) serves as cofactor.

Functionally, binds the 23S rRNA. This is Large ribosomal subunit protein bL31 from Desulfovibrio desulfuricans (strain ATCC 27774 / DSM 6949 / MB).